The following is a 459-amino-acid chain: MNIIEQKFYDSKAFFNTQQTKDISFRKEQLKKLSKAIKSYESDILEALYTDLGKNKVEAYATEIGITLKSIKIARKELKNWTKTKNVDTPLYLFPTKSYIKKEPYGTVLIIAPFNYPFQLVFEPLIGAIAAGNTAIIKPSELTPNVARVIKRLINETFDANYIEVIEGGIEETQTLIHLPFDYVFFTGSENVGKIVYQAASENLVPVTLEMGGKSPVIVDETANIKVASERICFGKFTNAGQTCVAPDYILVHESVKDDLITALSKTLREFYGQNIQQSPDYGRIVNLKHYHRLTSLLNSAQMNIVFGGHSDEDERYIEPTLLDHVTSDSAIMQEEIFGPILPILTYQSLDEAIAFIHQRPKPLSLYLFSEDENATQRVINELSFGGGAINDTLMHLANPKLPFGGVGASGMGRYHGKYSFDTFTHEKSYIFKSTRLESGVHLPPYKGKFKYIKAFFKN.

NAD(+) contacts are provided by residues 114–115 and 188–189; these read FN and GS. Glu-210 (proton acceptor) is an active-site residue. Met-211 is a binding site for NAD(+). Catalysis depends on Cys-244, which acts as the Nucleophile. Position 336 (Glu-336) interacts with NAD(+).

Belongs to the aldehyde dehydrogenase family.

The catalysed reaction is 4,4'-diaponeurosporenal + NAD(+) + H2O = 4,4'-diaponeurosporenoate + NADH + 2 H(+). It participates in carotenoid biosynthesis; staphyloxanthin biosynthesis; staphyloxanthin from farnesyl diphosphate. Its function is as follows. Involved in the biosynthesis of the yellow-orange carotenoid staphyloxanthin, which plays a role in the virulence via its protective function against oxidative stress. Catalyzes the oxidation of 4,4'-diaponeurosporen-4-al to yield 4,4'-diaponeurosporenoic acid. The chain is 4,4'-diaponeurosporen-aldehyde dehydrogenase from Staphylococcus aureus (strain NCTC 8325 / PS 47).